Consider the following 915-residue polypeptide: p53-induced death domain-containing protein 1 (915 aa).

A2 carries the N-acetylalanine modification. LRR repeat units follow at residues 131-152 (CLAH…VPEL), 154-176 (GLDA…GALP), 177-199 (ALTF…GSLS), 200-221 (TLQR…IGNL), 223-245 (SLSE…AGLR), 246-268 (SLRL…VHLP), and 269-290 (LITR…LLDA). At S304 the chain carries Phosphoserine. 2 ZU5 domains span residues 327-459 (DLDS…VLRP) and 460-601 (VSNT…WYTT). 2 peptidase S68 regions span residues 428–457 (DLET…LVVL) and 571–599 (DITT…WLWY). Catalysis depends on residues H449, S451, H591, and S593. The tract at residues 585 to 721 (ARFQVTHFSW…TTALDREAQD (137 aa)) is UPA domain. In terms of domain architecture, Death spans 793-878 (TQSNLLSVAS…DVAEEVRAIL (86 aa)). The tract at residues 888 to 915 (SIRRTGLAPEDSTLPGTSASQTPESAQA) is disordered. Polar residues predominate over residues 901–915 (LPGTSASQTPESAQA).

Forms a complex named the PIDDosome with CASP2 and CRADD. Forms a complex with IKBKG and RIPK1. Interacts with FADD and MADD. Undergoes autoproteolytic processing whose extent either directs cells towards survival or apoptotic pathways. Autoproteolytically cleaved into two main fragments PIDD-N and PIDD-C. PIDD-C can be further processed into PIDD-CC, a processing which is enhanced by DNA damage. The cleavage producing PIDD-C is required for translocation of PIDD1 to the nucleus upon DNA damage and activation of NF-kappa-B. PIDD-CC mediates the interaction with CRADD and the cleavage producing PIDD-CC is required for the activation of CASP2. PIDD-N remains associated with PIDD-C and PIDD-CC after cleavage. Ubiquitous.

The protein resides in the cytoplasm. Its subcellular location is the nucleus. Component of the DNA damage/stress response pathway that functions downstream of p53/TP53 and can either promote cell survival or apoptosis. Associated with CRADD and the CASP2 caspase, it forms the PIDDosome a complex that activates CASP2 and triggers apoptosis. Associated with IKBKG and RIPK1, it enhances sumoylation and ubiquitination of IKBKG which is important for activation of the transcription factor NF-kappa-B. The protein is p53-induced death domain-containing protein 1 of Mus musculus (Mouse).